The following is a 106-amino-acid chain: Large ribosomal subunit protein uL23 (106 aa).

Belongs to the universal ribosomal protein uL23 family. Part of the 50S ribosomal subunit. Contacts protein L29, and trigger factor when it is bound to the ribosome.

Functionally, one of the early assembly proteins it binds 23S rRNA. One of the proteins that surrounds the polypeptide exit tunnel on the outside of the ribosome. Forms the main docking site for trigger factor binding to the ribosome. The polypeptide is Large ribosomal subunit protein uL23 (Acinetobacter baumannii (strain SDF)).